A 446-amino-acid chain; its full sequence is Ribosomal protein uS12 methylthiotransferase RimO (446 aa).

Positions L4 to S119 constitute an MTTase N-terminal domain. Residues C13, C48, C82, C157, C161, and C164 each coordinate [4Fe-4S] cluster. In terms of domain architecture, Radical SAM core spans T143 to S373. Residues K376 to D442 form the TRAM domain.

Belongs to the methylthiotransferase family. RimO subfamily. [4Fe-4S] cluster serves as cofactor.

The protein localises to the cytoplasm. The catalysed reaction is L-aspartate(89)-[ribosomal protein uS12]-hydrogen + (sulfur carrier)-SH + AH2 + 2 S-adenosyl-L-methionine = 3-methylsulfanyl-L-aspartate(89)-[ribosomal protein uS12]-hydrogen + (sulfur carrier)-H + 5'-deoxyadenosine + L-methionine + A + S-adenosyl-L-homocysteine + 2 H(+). Its function is as follows. Catalyzes the methylthiolation of an aspartic acid residue of ribosomal protein uS12. The sequence is that of Ribosomal protein uS12 methylthiotransferase RimO from Clostridium kluyveri (strain ATCC 8527 / DSM 555 / NBRC 12016 / NCIMB 10680 / K1).